Here is a 25-residue protein sequence, read N- to C-terminus: Large ribosomal subunit protein uL30 (25 aa).

This sequence belongs to the universal ribosomal protein uL30 family. Part of the 50S ribosomal subunit.

This chain is Large ribosomal subunit protein uL30 (rpmD), found in Pseudomonas fluorescens biotype A.